The chain runs to 165 residues: NADH-quinone oxidoreductase subunit I (165 aa).

2 4Fe-4S ferredoxin-type domains span residues 57-86 (RRYE…IESD) and 96-125 (SRYD…ETHI). [4Fe-4S] cluster contacts are provided by C66, C69, C72, C76, C105, C108, C111, and C115.

The protein belongs to the complex I 23 kDa subunit family. NDH-1 is composed of 14 different subunits. Subunits NuoA, H, J, K, L, M, N constitute the membrane sector of the complex. [4Fe-4S] cluster serves as cofactor.

It localises to the cell inner membrane. The enzyme catalyses a quinone + NADH + 5 H(+)(in) = a quinol + NAD(+) + 4 H(+)(out). Its function is as follows. NDH-1 shuttles electrons from NADH, via FMN and iron-sulfur (Fe-S) centers, to quinones in the respiratory chain. The immediate electron acceptor for the enzyme in this species is believed to be ubiquinone. Couples the redox reaction to proton translocation (for every two electrons transferred, four hydrogen ions are translocated across the cytoplasmic membrane), and thus conserves the redox energy in a proton gradient. The sequence is that of NADH-quinone oxidoreductase subunit I from Polaromonas naphthalenivorans (strain CJ2).